The sequence spans 444 residues: Coagulation factor VII (444 aa).

A signal peptide spans 1–21; the sequence is MAPQARGLGLCSLLALQASLA. The propeptide occupies 22–39; sequence AVFITQEEAHSVLRRQRR. Residues 40 to 84 form the Gla domain; sequence ANSFLEELRPGSLERECKEELCSFEEAREVFQSTERTKQFWITYN. Residues E45, E46, E53, E55, E58, E59, E64, E65, E68, and E74 each carry the 4-carboxyglutamate modification. A disulfide bridge links C56 with C61. An EGF-like 1; calcium-binding domain is found at 85-121; the sequence is DGDQCASNPCQNGGSCEDQIQSYICFCLADFEGRNCE. Intrachain disulfides connect C89/C100, C94/C109, C111/C120, C130/C141, C137/C151, C153/C166, C174/C301, C198/C203, and C217/C233. S91 carries an O-linked (Glc...) serine; alternate glycan. S91 carries O-linked (Xyl...) serine; alternate glycosylation. S99 carries O-linked (Fuc) serine glycosylation. D102 is subject to (3R)-3-hydroxyaspartate. The 42-residue stretch at 126 to 167 folds into the EGF-like 2 domain; the sequence is DQLICMYENGGCEQYCSDHVGSQRSCRCHEGYTLLPNGVSCT. The 240-residue stretch at 192 to 431 folds into the Peptidase S1 domain; the sequence is IVGGKVCPKG…YTEWLSRLMR (240 aa). N211 carries N-linked (GlcNAc...) asparagine glycosylation. Catalysis depends on H232, which acts as the Charge relay system. Residue N242 is glycosylated (N-linked (GlcNAc...) asparagine). The active-site Charge relay system is the D281. N306 carries an N-linked (GlcNAc...) asparagine glycan. A disulfide bond links C349 and C368. D377 is a substrate binding site. Cysteines 379 and 407 form a disulfide. S383 (charge relay system) is an active-site residue.

Belongs to the peptidase S1 family. As to quaternary structure, heterodimer of a light chain and a heavy chain linked by a disulfide bond. Post-translationally, the vitamin K-dependent, enzymatic carboxylation of some glutamate residues allows the modified protein to bind calcium. In terms of processing, the iron and 2-oxoglutarate dependent 3-hydroxylation of aspartate and asparagine is (R) stereospecific within EGF domains. O-glycosylated. O-fucosylated by POFUT1 on a conserved serine or threonine residue found in the consensus sequence C2-X(4,5)-[S/T]-C3 of EGF domains, where C2 and C3 are the second and third conserved cysteines. Post-translationally, can be either O-glucosylated or O-xylosylated at Ser-91 by POGLUT1. In terms of tissue distribution, plasma.

It localises to the secreted. It carries out the reaction Selective cleavage of Arg-|-Ile bond in factor X to form factor Xa.. In terms of biological role, initiates the extrinsic pathway of blood coagulation. Serine protease that circulates in the blood in a zymogen form. Factor VII is converted to factor VIIa by factor Xa, factor XIIa, factor IXa, or thrombin by minor proteolysis. In the presence of tissue factor and calcium ions, factor VIIa then converts factor X to factor Xa by limited proteolysis. Factor VIIa also converts factor IX to factor IXa in the presence of tissue factor and calcium. This Oryctolagus cuniculus (Rabbit) protein is Coagulation factor VII (F7).